The primary structure comprises 92 residues: Cell division protein FtsB (92 aa).

The Cytoplasmic segment spans residues 1-3; that stretch reads MRF. Residues 4–21 form a helical membrane-spanning segment; that stretch reads FQVGLLCLALFVQYRLWF. At 22-92 the chain is on the periplasmic side; the sequence is GHNGVQDYTR…TFIRVLPAQQ (71 aa). Positions 40 to 73 form a coiled coil; that stretch reads LQTNEKLIKRNKVLTADIEDLKLGHEGIEERARN.

It belongs to the FtsB family. Part of a complex composed of FtsB, FtsL and FtsQ.

The protein localises to the cell inner membrane. Its function is as follows. Essential cell division protein. May link together the upstream cell division proteins, which are predominantly cytoplasmic, with the downstream cell division proteins, which are predominantly periplasmic. The polypeptide is Cell division protein FtsB (Pseudoalteromonas translucida (strain TAC 125)).